The following is a 300-amino-acid chain: tRNA dimethylallyltransferase (300 aa).

9–16 (GPTASGKS) contacts ATP. Residue 11–16 (TASGKS) participates in substrate binding. An interaction with substrate tRNA region spans residues 34-37 (DSKQ).

This sequence belongs to the IPP transferase family. Monomer. The cofactor is Mg(2+).

It carries out the reaction adenosine(37) in tRNA + dimethylallyl diphosphate = N(6)-dimethylallyladenosine(37) in tRNA + diphosphate. Its function is as follows. Catalyzes the transfer of a dimethylallyl group onto the adenine at position 37 in tRNAs that read codons beginning with uridine, leading to the formation of N6-(dimethylallyl)adenosine (i(6)A). This is tRNA dimethylallyltransferase from Ehrlichia ruminantium (strain Welgevonden).